The primary structure comprises 243 residues: MSNGRHLAKGSPMPDVPEDGILRLYSMRFCPFAQRVHLVLDAKQIPYHSIYINLTDKPEWLLEKNPQGKVPALEIVREPGPPVLTESLLICEYLDEQYPLRPLYPRDPLKKVQDKLLIERFRAVLGAFFKASDGGDLEPFWSGLDIYERELARRGTEFFGGEQTGILDYMIWPWCERLELLKLQRGEDYNYDQSRFPQLTLWLERMKRDPAVMAFYMEAEVQAEFLRTRSLGRPNYNLLVKDA.

A GST N-terminal domain is found at 20-102; the sequence is GILRLYSMRF…YLDEQYPLRP (83 aa). Cys30 (nucleophile) is an active-site residue. Glutathione contacts are provided by residues Lys57, Val70, and 86–87; that span reads ES. The region spanning 107-230 is the GST C-terminal domain; that stretch reads DPLKKVQDKL…VQAEFLRTRS (124 aa).

Belongs to the GST superfamily. Omega family. In terms of assembly, homodimer.

It carries out the reaction 2-amino-6-acetyl-3,7,8,9-tetrahydro-3H-pyrimido[4,5-b][1,4]diazepin-4-one + glutathione disulfide + H2O = 6-pyruvoyl-5,6,7,8-tetrahydropterin + 2 glutathione. In terms of biological role, mediates the conversion of 2-amino-4-oxo-6-pyruvoyl-5,6,7,8-tetrahydropteridine (6-PTP; also named 6-pyruvoyltetrahydropterin) to 2-amino-6-acetyl-3,7,8,9-tetrahydro-3H-pyrimido(4,5-b)[1,4]diazepin-4-one (pyrimidodiazepine or PDA), a key intermediate in red eye pigment drosopterin biosynthesis. The polypeptide is Pyrimidodiazepine synthase (Drosophila melanogaster (Fruit fly)).